A 500-amino-acid polypeptide reads, in one-letter code: Probable cytosol aminopeptidase (500 aa).

Lys-265 and Asp-270 together coordinate Mn(2+). Residue Lys-277 is part of the active site. The Mn(2+) site is built by Asp-288, Asp-347, and Glu-349. Arg-351 is a catalytic residue.

It belongs to the peptidase M17 family. Requires Mn(2+) as cofactor.

The protein resides in the cytoplasm. The enzyme catalyses Release of an N-terminal amino acid, Xaa-|-Yaa-, in which Xaa is preferably Leu, but may be other amino acids including Pro although not Arg or Lys, and Yaa may be Pro. Amino acid amides and methyl esters are also readily hydrolyzed, but rates on arylamides are exceedingly low.. The catalysed reaction is Release of an N-terminal amino acid, preferentially leucine, but not glutamic or aspartic acids.. Presumably involved in the processing and regular turnover of intracellular proteins. Catalyzes the removal of unsubstituted N-terminal amino acids from various peptides. In Corynebacterium diphtheriae (strain ATCC 700971 / NCTC 13129 / Biotype gravis), this protein is Probable cytosol aminopeptidase.